Consider the following 484-residue polypeptide: Membrane-bound lytic murein transglycosylase F (484 aa).

Positions M1–A18 are cleaved as a signal peptide. A non-LT domain region spans residues I19–F267. The interval S268–E484 is LT domain. E312 is a catalytic residue. Positions A459–E484 are disordered.

In the N-terminal section; belongs to the bacterial solute-binding protein 3 family. It in the C-terminal section; belongs to the transglycosylase Slt family.

The protein resides in the cell outer membrane. It carries out the reaction Exolytic cleavage of the (1-&gt;4)-beta-glycosidic linkage between N-acetylmuramic acid (MurNAc) and N-acetylglucosamine (GlcNAc) residues in peptidoglycan, from either the reducing or the non-reducing ends of the peptidoglycan chains, with concomitant formation of a 1,6-anhydrobond in the MurNAc residue.. Its function is as follows. Murein-degrading enzyme that degrades murein glycan strands and insoluble, high-molecular weight murein sacculi, with the concomitant formation of a 1,6-anhydromuramoyl product. Lytic transglycosylases (LTs) play an integral role in the metabolism of the peptidoglycan (PG) sacculus. Their lytic action creates space within the PG sacculus to allow for its expansion as well as for the insertion of various structures such as secretion systems and flagella. The sequence is that of Membrane-bound lytic murein transglycosylase F from Mannheimia succiniciproducens (strain KCTC 0769BP / MBEL55E).